The chain runs to 335 residues: Transaldolase (335 aa).

The active-site Schiff-base intermediate with substrate is the lysine 135.

The protein belongs to the transaldolase family. Type 1 subfamily. In terms of assembly, homodimer.

The protein localises to the cytoplasm. The enzyme catalyses D-sedoheptulose 7-phosphate + D-glyceraldehyde 3-phosphate = D-erythrose 4-phosphate + beta-D-fructose 6-phosphate. The protein operates within carbohydrate degradation; pentose phosphate pathway; D-glyceraldehyde 3-phosphate and beta-D-fructose 6-phosphate from D-ribose 5-phosphate and D-xylulose 5-phosphate (non-oxidative stage): step 2/3. Its function is as follows. Transaldolase is important for the balance of metabolites in the pentose-phosphate pathway. The polypeptide is Transaldolase (Prochlorococcus marinus (strain SARG / CCMP1375 / SS120)).